The chain runs to 480 residues: Uronate isomerase (480 aa).

This sequence belongs to the metallo-dependent hydrolases superfamily. Uronate isomerase family.

The catalysed reaction is D-glucuronate = D-fructuronate. The enzyme catalyses aldehydo-D-galacturonate = keto-D-tagaturonate. It participates in carbohydrate metabolism; pentose and glucuronate interconversion. This is Uronate isomerase from Phenylobacterium zucineum (strain HLK1).